A 247-amino-acid chain; its full sequence is uncharacterized protein (247 aa).

NAD(+)-binding residues include leucine 19, aspartate 38, aspartate 63, and valine 64. Serine 142 provides a ligand contact to substrate. 3 residues coordinate NAD(+): tyrosine 155, lysine 159, and serine 190. Tyrosine 155 acts as the Proton acceptor in catalysis.

It belongs to the short-chain dehydrogenases/reductases (SDR) family.

This is an uncharacterized protein from Mycobacterium bovis (strain ATCC BAA-935 / AF2122/97).